The following is a 954-amino-acid chain: Protein translocase subunit SecA (954 aa).

Residues Gln86, 104–108 (GEGKT), and Asp494 each bind ATP. The interval 520–549 (LDPDNPLGSASTTSRGGGQGFGPASPKPKK) is disordered.

This sequence belongs to the SecA family. Monomer and homodimer. Part of the essential Sec protein translocation apparatus which comprises SecA, SecYEG and auxiliary proteins SecDF. Other proteins may also be involved.

Its subcellular location is the cell inner membrane. The protein localises to the cellular thylakoid membrane. It is found in the cytoplasm. It carries out the reaction ATP + H2O + cellular proteinSide 1 = ADP + phosphate + cellular proteinSide 2.. Its function is as follows. Part of the Sec protein translocase complex. Interacts with the SecYEG preprotein conducting channel. Has a central role in coupling the hydrolysis of ATP to the transfer of proteins into and across the cell membrane, serving as an ATP-driven molecular motor driving the stepwise translocation of polypeptide chains across the membrane. In terms of biological role, probably participates in protein translocation into and across both the cytoplasmic and thylakoid membranes in cyanobacterial cells. The protein is Protein translocase subunit SecA of Synechococcus sp. (strain JA-3-3Ab) (Cyanobacteria bacterium Yellowstone A-Prime).